We begin with the raw amino-acid sequence, 343 residues long: Chlorophyll(ide) b reductase NOL, chloroplastic (343 aa).

A chloroplast-targeting transit peptide spans 1-54; sequence MAATAAYLPLRAQAQVGLAPLRPSGSAAAGARLPGRTARRRLAARGGPEAAGIR. Residue 78–102 participates in NAD(+) binding; sequence ITGSTKGIGYALAKEFLKAGDNVVI. Tyr228 functions as the Proton acceptor in the catalytic mechanism.

Belongs to the short-chain dehydrogenases/reductases (SDR) family. Interacts with NCY1 to form a complex that acts as a chlorophyll b reductase. Expressed in leaves and stems. Also detected in non-photosynthetic tissues such as roots.

The protein localises to the plastid. Its subcellular location is the chloroplast thylakoid membrane. The enzyme catalyses 7(1)-hydroxychlorophyllide a + NAD(+) = chlorophyllide b + NADH + H(+). It catalyses the reaction 7(1)-hydroxychlorophyllide a + NADP(+) = chlorophyllide b + NADPH + H(+). Required for chlorophyll b degradation. This Oryza sativa subsp. japonica (Rice) protein is Chlorophyll(ide) b reductase NOL, chloroplastic (NOL).